Consider the following 285-residue polypeptide: Tryptophan synthase alpha chain (285 aa).

Residues Glu53 and Asp64 each act as proton acceptor in the active site.

It belongs to the TrpA family. As to quaternary structure, tetramer of two alpha and two beta chains.

The enzyme catalyses (1S,2R)-1-C-(indol-3-yl)glycerol 3-phosphate + L-serine = D-glyceraldehyde 3-phosphate + L-tryptophan + H2O. Its pathway is amino-acid biosynthesis; L-tryptophan biosynthesis; L-tryptophan from chorismate: step 5/5. In terms of biological role, the alpha subunit is responsible for the aldol cleavage of indoleglycerol phosphate to indole and glyceraldehyde 3-phosphate. This chain is Tryptophan synthase alpha chain, found in Bordetella parapertussis (strain 12822 / ATCC BAA-587 / NCTC 13253).